The sequence spans 120 residues: Cell division protein FtsL (120 aa).

The Cytoplasmic segment spans residues 1–36 (MTNLAVKYKQQAQEEVQIQTPPQQMAKPKVKAKITR). A helical membrane pass occupies residues 37-57 (IEKLLYVAFIGFLLYACVAFI). The Extracellular portion of the chain corresponds to 58 to 120 (GNKAGLYQVN…INANNVKGLK (63 aa)).

This sequence belongs to the FtsL family.

Its subcellular location is the cell membrane. Its function is as follows. Essential cell division protein. This chain is Cell division protein FtsL, found in Bacillus cereus (strain ATCC 14579 / DSM 31 / CCUG 7414 / JCM 2152 / NBRC 15305 / NCIMB 9373 / NCTC 2599 / NRRL B-3711).